A 258-amino-acid polypeptide reads, in one-letter code: Acetylglutamate kinase (258 aa).

Residues 44-45 (GG), Arg66, and Asn158 each bind substrate. ATP contacts are provided by residues 181-186 (DISSIL) and 209-211 (IIT).

This sequence belongs to the acetylglutamate kinase family. ArgB subfamily. In terms of assembly, homodimer.

The protein resides in the cytoplasm. The catalysed reaction is N-acetyl-L-glutamate + ATP = N-acetyl-L-glutamyl 5-phosphate + ADP. It functions in the pathway amino-acid biosynthesis; L-arginine biosynthesis; N(2)-acetyl-L-ornithine from L-glutamate: step 2/4. Catalyzes the ATP-dependent phosphorylation of N-acetyl-L-glutamate. The sequence is that of Acetylglutamate kinase from Buchnera aphidicola subsp. Schizaphis graminum (strain Sg).